Consider the following 389-residue polypeptide: Large envelope protein (389 aa).

N-acetylmethionine is present on M1. G2 carries the N-myristoyl glycine; by host lipid modification. The pre-S1 stretch occupies residues 2 to 108 (GQNLSTSNPL…PPLRTTHPQA (107 aa)). The pre-S stretch occupies residues 2-163 (GQNLSTSNPL…FSRIGDPALN (162 aa)). Over 2–170 (GQNLSTSNPL…ALNMENITSG (169 aa)) the chain is Virion surface; in external conformation. The Intravirion; in internal conformation segment spans residues 2-242 (GQNLSTSNPL…PGYRWMCLRR (241 aa)). Positions 76-102 (TLPANPPPASTNRQSGRQPTPLSPPLR) are disordered. The span at 85–95 (STNRQSGRQPT) shows a compositional bias: polar residues. Residues 109-163 (MHWNSTTFHQTLQDPRVRGLYFPAGGSSSGTVNPVPTTTSPISSIFSRIGDPALN) are pre-S2. The helical transmembrane segment at 171-191 (FLGPLLVLQAGFFLLTRILTI) threads the bilayer. Over 192 to 242 (PQSLDSWWTSLNFLGGTTVCLGQNSQSPISNHSPTSCPPTCPGYRWMCLRR) the chain is Intravirion; in external conformation. Residues 243–263 (FIIFLFILLLCLIFLLVLLDY) traverse the membrane as a helical segment. Residues 264–337 (QGMLPVCPLI…WASARFSWLS (74 aa)) are Virion surface-facing. N-linked (GlcNAc...) asparagine; by host glycosylation occurs at N309. Residues 338–358 (LLVPFVQWFVGLSPIVWLSVI) form a helical membrane-spanning segment. Residues 359 to 364 (WMMWYW) lie on the Intravirion side of the membrane. Residues 365–387 (GPSLYSILSPFLPLLPIFFCLWA) traverse the membrane as a helical segment. Residues 388 to 389 (YI) are Virion surface-facing.

The protein belongs to the orthohepadnavirus major surface antigen family. In terms of assembly, in its internal form (Li-HBsAg), interacts with the capsid protein and with the isoform S. Interacts with host chaperone CANX. As to quaternary structure, associates with host chaperone CANX through its pre-S2 N glycan; this association may be essential for isoform M proper secretion. Interacts with isoform L. Interacts with the antigens of satellite virus HDV (HDVAgs); this interaction is required for encapsidation of HDV genomic RNA. Post-translationally, isoform M is N-terminally acetylated by host at a ratio of 90%, and N-glycosylated by host at the pre-S2 region. Myristoylated.

The protein resides in the virion membrane. Its function is as follows. The large envelope protein exists in two topological conformations, one which is termed 'external' or Le-HBsAg and the other 'internal' or Li-HBsAg. In its external conformation the protein attaches the virus to cell receptors and thereby initiating infection. This interaction determines the species specificity and liver tropism. This attachment induces virion internalization predominantly through caveolin-mediated endocytosis. The large envelope protein also assures fusion between virion membrane and endosomal membrane. In its internal conformation the protein plays a role in virion morphogenesis and mediates the contact with the nucleocapsid like a matrix protein. The middle envelope protein plays an important role in the budding of the virion. It is involved in the induction of budding in a nucleocapsid independent way. In this process the majority of envelope proteins bud to form subviral lipoprotein particles of 22 nm of diameter that do not contain a nucleocapsid. The sequence is that of Large envelope protein from Hepatitis B virus genotype D subtype adw (isolate United Kingdom/adyw/1979) (HBV-D).